Reading from the N-terminus, the 434-residue chain is MNTSSRSSEPSKVADDVYVQTRWNNEFKHADYLPESLQKCLDQEKTVLERYSELVEVSKTVANESSQALVKHTTKPGDQLVRRVFQQPHQQISLMERYEKTRSYKPQWHAPWKLSKVINGHTGWVRCVCVDPVDNEWFATGSNDTTIKIWDLAAGKLKITLIGHVMSVRDIAISKRHPYMFSASEDKLVKCWDLERNTAIRDFHGHLSGVHTVDVHPSLDIIATAGRDAVVRLWDIRSRSEIMVLPGHKSPINKVKCLPVDPQIISCSGDATVRLWDIIAGKASKVLTHHSRNIRDLTLHPAEFSFASVSTNDVRSWKLPEGQLLTNFQSQNTGILNTVSINHDNVLLAGGDDGTLCFYDYKTGHKYQSMMTTEVAGSLESERSILCSTFDVTGTRLITGEGDKSIKIWKQVPDATEDTFPGLPWNPTLISQRF.

WD repeat units follow at residues 120-160 (GHTG…LKIT), 163-202 (GHVMSVRDIAISKRHPYMFSASEDKLVKCWDLERNTAIRD), 205-244 (GHLSGVHTVDVHPSLDIIATAGRDAVVRLWDIRSRSEIMV), 247-288 (GHKS…KVLT), 290-329 (HSRNIRDLTLHPAEFSFASVSTNDVRSWKLPEGQLLTNFQ), 331-369 (QNTGILNTVSINHDNVLLAGGDDGTLCFYDYKTGHKYQS), and 380-419 (ESERSILCSTFDVTGTRLITGEGDKSIKIWKQVPDATEDT).

This sequence belongs to the WD repeat PRL1/PRL2 family. In terms of assembly, associated with the spliceosome.

It localises to the cytoplasm. It is found in the nucleus. Its function is as follows. Involved in pre-mRNA splicing and required for cell cycle progression at G2/M. The sequence is that of Pre-mRNA-splicing factor PRP46 (PRP46) from Kluyveromyces lactis (strain ATCC 8585 / CBS 2359 / DSM 70799 / NBRC 1267 / NRRL Y-1140 / WM37) (Yeast).